Reading from the N-terminus, the 380-residue chain is Queuine tRNA-ribosyltransferase (380 aa).

Aspartate 96 acts as the Proton acceptor in catalysis. Substrate is bound by residues 96–100 (DSGGF), aspartate 150, glutamine 193, and glycine 220. Residues 251–257 (GVGAPDS) are RNA binding. The active-site Nucleophile is aspartate 270. The RNA binding; important for wobble base 34 recognition stretch occupies residues 275-279 (TRIAR). 4 residues coordinate Zn(2+): cysteine 308, cysteine 310, cysteine 313, and histidine 339.

The protein belongs to the queuine tRNA-ribosyltransferase family. In terms of assembly, homodimer. Within each dimer, one monomer is responsible for RNA recognition and catalysis, while the other monomer binds to the replacement base PreQ1. Requires Zn(2+) as cofactor.

It carries out the reaction 7-aminomethyl-7-carbaguanine + guanosine(34) in tRNA = 7-aminomethyl-7-carbaguanosine(34) in tRNA + guanine. Its pathway is tRNA modification; tRNA-queuosine biosynthesis. Catalyzes the base-exchange of a guanine (G) residue with the queuine precursor 7-aminomethyl-7-deazaguanine (PreQ1) at position 34 (anticodon wobble position) in tRNAs with GU(N) anticodons (tRNA-Asp, -Asn, -His and -Tyr). Catalysis occurs through a double-displacement mechanism. The nucleophile active site attacks the C1' of nucleotide 34 to detach the guanine base from the RNA, forming a covalent enzyme-RNA intermediate. The proton acceptor active site deprotonates the incoming PreQ1, allowing a nucleophilic attack on the C1' of the ribose to form the product. After dissociation, two additional enzymatic reactions on the tRNA convert PreQ1 to queuine (Q), resulting in the hypermodified nucleoside queuosine (7-(((4,5-cis-dihydroxy-2-cyclopenten-1-yl)amino)methyl)-7-deazaguanosine). This chain is Queuine tRNA-ribosyltransferase, found in Streptococcus suis (strain 98HAH33).